We begin with the raw amino-acid sequence, 291 residues long: G1/S-specific cyclin-D2 (291 aa).

Residues 264–291 (QQQQSNPSKTIEELDQASTPTDVRDINL) form a disordered region. Phosphothreonine is present on threonine 282.

Belongs to the cyclin family. Cyclin D subfamily. In terms of assembly, interacts with the CDK4 and CDK6 protein kinases to form a serine/threonine kinase holoenzyme complex. The cyclin subunit imparts substrate specificity to the complex. Phosphorylation at Thr-282 by MAP kinases is required for ubiquitination and degradation by the DCX(AMBRA1) complex. Post-translationally, ubiquitinated by the DCX(AMBRA1) complex during the transition from G1 to S cell phase, leading to its degradation: ubiquitination is dependent on Thr-282 phosphorylation. The DCX(AMBRA1) complex represents the major regulator of CCND2 stability during the G1/S transition.

It localises to the nucleus. Its subcellular location is the cytoplasm. It is found in the nucleus membrane. Regulatory component of the cyclin D2-CDK4 (DC) complex that phosphorylates and inhibits members of the retinoblastoma (RB) protein family including RB1 and regulates the cell-cycle during G(1)/S transition. Phosphorylation of RB1 allows dissociation of the transcription factor E2F from the RB/E2F complex and the subsequent transcription of E2F target genes which are responsible for the progression through the G(1) phase. Hypophosphorylates RB1 in early G(1) phase. Cyclin D-CDK4 complexes are major integrators of various mitogenenic and antimitogenic signals. The protein is G1/S-specific cyclin-D2 (CCND2) of Gallus gallus (Chicken).